A 308-amino-acid polypeptide reads, in one-letter code: GTPase Era (308 aa).

The Era-type G domain occupies 9–179 (RAGFVALIGE…RAWLGASLPE (171 aa)). The segment at 17 to 24 (GEPNAGKS) is G1. 17 to 24 (GEPNAGKS) provides a ligand contact to GTP. Positions 43 to 47 (QTTRA) are G2. The interval 64 to 67 (DTPG) is G3. GTP-binding positions include 64-68 (DTPGL) and 129-132 (NKID). Positions 129-132 (NKID) are G4. Positions 158 to 160 (ISA) are G5. A KH type-2 domain is found at 210 to 287 (LHQELPYQLT…HLFLQVKVRP (78 aa)).

Belongs to the TRAFAC class TrmE-Era-EngA-EngB-Septin-like GTPase superfamily. Era GTPase family. As to quaternary structure, monomer.

It is found in the cytoplasm. It localises to the cell inner membrane. Functionally, an essential GTPase that binds both GDP and GTP, with rapid nucleotide exchange. Plays a role in 16S rRNA processing and 30S ribosomal subunit biogenesis and possibly also in cell cycle regulation and energy metabolism. The chain is GTPase Era from Dinoroseobacter shibae (strain DSM 16493 / NCIMB 14021 / DFL 12).